Reading from the N-terminus, the 744-residue chain is Tripartite motif-containing protein 2 (744 aa).

A Phosphoserine modification is found at S10. An RING-type zinc finger spans residues 23–64 (CSICLERYKNPKVLPCLHTFCERCLQNYIPAHSLTLSCPVCR). The B box-type zinc finger occupies 113–154 (GKPLSCPNHDGNVMEFYCQSCETAMCRECTEGEHAEHPTVPL). Residues C118, H121, C141, and H146 each contribute to the Zn(2+) site. A Filamin repeat occupies 320 to 421 (TTNAVASETV…IRGSPFKLKV (102 aa)). T371 carries the post-translational modification Phosphothreonine. A phosphoserine mark is found at S375, S424, and S428. Positions 432 to 462 (EGVKRRVKSPGSGHVKQKAVKRPASMYSTGK) are disordered. NHL repeat units follow at residues 473–516 (IFRV…FSND), 520–563 (KSRF…FSSD), 564–605 (GKFK…FQPN), 609–652 (VTRF…FNQE), 656–699 (MLKF…FDGS), and 700–743 (GSFL…YRYL).

It belongs to the TRIM/RBCC family. Forms homooligomers. Interacts with TRIM3; this interaction reduces TRIM2 activity. Interacts with myosin V; myosin V may not be a substrate for ubiquitination. Interacts with NEFL. Interacts with phosphorylated BCL2L11. Interacts with SIRPA. Post-translationally, RING-type zinc finger-dependent and UBE2D1-dependent autoubiquitination.

It is found in the cytoplasm. It carries out the reaction S-ubiquitinyl-[E2 ubiquitin-conjugating enzyme]-L-cysteine + [acceptor protein]-L-lysine = [E2 ubiquitin-conjugating enzyme]-L-cysteine + N(6)-ubiquitinyl-[acceptor protein]-L-lysine.. It participates in protein modification; protein ubiquitination. In terms of biological role, UBE2D1-dependent E3 ubiquitin-protein ligase that mediates the ubiquitination of NEFL and of phosphorylated BCL2L11. Plays a neuroprotective function. May play a role in neuronal rapid ischemic tolerance. Plays a role in antiviral immunity and limits New World arenavirus infection independently of its ubiquitin ligase activity. The chain is Tripartite motif-containing protein 2 (TRIM2) from Callithrix jacchus (White-tufted-ear marmoset).